We begin with the raw amino-acid sequence, 170 residues long: Translation machinery-associated protein 16 homolog (170 aa).

It belongs to the TMA16 family.

The sequence is that of Translation machinery-associated protein 16 homolog from Dictyostelium discoideum (Social amoeba).